The following is a 65-amino-acid chain: Beta-defensin 106A (65 aa).

A signal peptide spans 1–20; it reads MRTFLFLFAVLFFLTPAKNA. 3 disulfides stabilise this stretch: C26–C53, C33–C47, and C37–C54.

It belongs to the beta-defensin family. Monomer. Interacts with CCR2 (via extracellular N-terminal region); this interaction may preferentially require specific tyrosine sulfation on CCR2.

It is found in the secreted. The protein localises to the membrane. Functionally, has antibacterial activity. Acts as a ligand for C-C chemokine receptor CCR2. This is Beta-defensin 106A (DEFB106A) from Gorilla gorilla gorilla (Western lowland gorilla).